Reading from the N-terminus, the 449-residue chain is Exodeoxyribonuclease 7 large subunit (449 aa).

The protein belongs to the XseA family. In terms of assembly, heterooligomer composed of large and small subunits.

It localises to the cytoplasm. The catalysed reaction is Exonucleolytic cleavage in either 5'- to 3'- or 3'- to 5'-direction to yield nucleoside 5'-phosphates.. Functionally, bidirectionally degrades single-stranded DNA into large acid-insoluble oligonucleotides, which are then degraded further into small acid-soluble oligonucleotides. The protein is Exodeoxyribonuclease 7 large subunit of Lacticaseibacillus casei (strain BL23) (Lactobacillus casei).